A 226-amino-acid polypeptide reads, in one-letter code: ATP-dependent dethiobiotin synthetase BioD (226 aa).

An ATP-binding site is contributed by 13 to 18 (DVGKTL). Threonine 17 contributes to the Mg(2+) binding site. Lysine 38 is a catalytic residue. ATP is bound by residues aspartate 55, 117–120 (EGAG), 177–178 (NR), 206–208 (PFV), and glutamate 213. Residues aspartate 55 and glutamate 117 each contribute to the Mg(2+) site.

Belongs to the dethiobiotin synthetase family. As to quaternary structure, homodimer. Mg(2+) is required as a cofactor.

The protein localises to the cytoplasm. It carries out the reaction (7R,8S)-7,8-diammoniononanoate + CO2 + ATP = (4R,5S)-dethiobiotin + ADP + phosphate + 3 H(+). The protein operates within cofactor biosynthesis; biotin biosynthesis; biotin from 7,8-diaminononanoate: step 1/2. Catalyzes a mechanistically unusual reaction, the ATP-dependent insertion of CO2 between the N7 and N8 nitrogen atoms of 7,8-diaminopelargonic acid (DAPA, also called 7,8-diammoniononanoate) to form a ureido ring. This is ATP-dependent dethiobiotin synthetase BioD from Aeromonas hydrophila subsp. hydrophila (strain ATCC 7966 / DSM 30187 / BCRC 13018 / CCUG 14551 / JCM 1027 / KCTC 2358 / NCIMB 9240 / NCTC 8049).